The chain runs to 827 residues: DNA ligase (827 aa).

NAD(+) is bound by residues 45-49 (DAAYD), 94-95 (SL), and E128. K130 serves as the catalytic N6-AMP-lysine intermediate. NAD(+)-binding residues include R151, E188, K304, and K328. 4 residues coordinate Zn(2+): C451, C454, C475, and C481. In terms of domain architecture, BRCT spans 748–827 (AAAAAFSGRT…AEWLAMVEAA (80 aa)).

It belongs to the NAD-dependent DNA ligase family. LigA subfamily. Requires Mg(2+) as cofactor. It depends on Mn(2+) as a cofactor.

It catalyses the reaction NAD(+) + (deoxyribonucleotide)n-3'-hydroxyl + 5'-phospho-(deoxyribonucleotide)m = (deoxyribonucleotide)n+m + AMP + beta-nicotinamide D-nucleotide.. DNA ligase that catalyzes the formation of phosphodiester linkages between 5'-phosphoryl and 3'-hydroxyl groups in double-stranded DNA using NAD as a coenzyme and as the energy source for the reaction. It is essential for DNA replication and repair of damaged DNA. The protein is DNA ligase of Methylobacterium sp. (strain 4-46).